Here is a 587-residue protein sequence, read N- to C-terminus: Estrogen receptor (587 aa).

Positions 1-176 are modulating (transactivation AF-1); that stretch reads MTLHTKTSGV…SMESTKETRY (176 aa). NR C4-type zinc fingers lie at residues 177–197 and 213–237; these read CAVC…CEGC and CPAT…LRKC. The nuclear receptor DNA-binding region spans 177–242; the sequence is CAVCNDYASG…RLRKCYEVGM (66 aa). The interval 243–302 is hinge; sequence MKGGIRKDRRGGRVMKQKRQREEQDSRNGEASSTELRAPTLWASPLVVKHNKKNSPALSL. The disordered stretch occupies residues 248–277; it reads RKDRRGGRVMKQKRQREEQDSRNGEASSTE. Over residues 249–261 the composition is skewed to basic residues; the sequence is KDRRGGRVMKQKR. The region spanning 303–539 is the NR LBD domain; that stretch reads TAEQMVSALL…DLLLEMLDAH (237 aa). Residues 303–587 are transactivation AF-2; the sequence is TAEQMVSALL…KEEENMQNTL (285 aa).

It belongs to the nuclear hormone receptor family. NR3 subfamily. In terms of assembly, binds DNA as a homodimer. Can form a heterodimer with ER-beta.

The protein resides in the nucleus. Functionally, the steroid hormones and their receptors are involved in the regulation of eukaryotic gene expression and affect cellular proliferation and differentiation in target tissues. This chain is Estrogen receptor (ESR1), found in Taeniopygia guttata (Zebra finch).